The sequence spans 274 residues: 2,3,4,5-tetrahydropyridine-2,6-dicarboxylate N-succinyltransferase (274 aa).

2 residues coordinate substrate: arginine 104 and aspartate 141.

The protein belongs to the transferase hexapeptide repeat family. In terms of assembly, homotrimer.

The protein localises to the cytoplasm. It catalyses the reaction (S)-2,3,4,5-tetrahydrodipicolinate + succinyl-CoA + H2O = (S)-2-succinylamino-6-oxoheptanedioate + CoA. The protein operates within amino-acid biosynthesis; L-lysine biosynthesis via DAP pathway; LL-2,6-diaminopimelate from (S)-tetrahydrodipicolinate (succinylase route): step 1/3. This is 2,3,4,5-tetrahydropyridine-2,6-dicarboxylate N-succinyltransferase from Salmonella choleraesuis (strain SC-B67).